Here is a 205-residue protein sequence, read N- to C-terminus: ATP phosphoribosyltransferase (205 aa).

This sequence belongs to the ATP phosphoribosyltransferase family. Short subfamily. In terms of assembly, heteromultimer composed of HisG and HisZ subunits.

It is found in the cytoplasm. It carries out the reaction 1-(5-phospho-beta-D-ribosyl)-ATP + diphosphate = 5-phospho-alpha-D-ribose 1-diphosphate + ATP. It functions in the pathway amino-acid biosynthesis; L-histidine biosynthesis; L-histidine from 5-phospho-alpha-D-ribose 1-diphosphate: step 1/9. Catalyzes the condensation of ATP and 5-phosphoribose 1-diphosphate to form N'-(5'-phosphoribosyl)-ATP (PR-ATP). Has a crucial role in the pathway because the rate of histidine biosynthesis seems to be controlled primarily by regulation of HisG enzymatic activity. In Helicobacter hepaticus (strain ATCC 51449 / 3B1), this protein is ATP phosphoribosyltransferase.